Consider the following 465-residue polypeptide: 23S rRNA (uracil(1939)-C(5))-methyltransferase RlmD (465 aa).

The interval 1-22 (MSEAVPTSARKSRNAPVAPGPA) is disordered. Residues 16–80 (PVAPGPAPVL…PSYEQATVVD (65 aa)) enclose the TRAM domain. [4Fe-4S] cluster is bound by residues Cys-93, Cys-99, Cys-102, and Cys-181. The S-adenosyl-L-methionine site is built by Gln-289, Phe-318, Asn-323, Glu-339, Asn-367, and Asp-388. The active-site Nucleophile is the Cys-421.

The protein belongs to the class I-like SAM-binding methyltransferase superfamily. RNA M5U methyltransferase family. RlmD subfamily.

The enzyme catalyses uridine(1939) in 23S rRNA + S-adenosyl-L-methionine = 5-methyluridine(1939) in 23S rRNA + S-adenosyl-L-homocysteine + H(+). Its function is as follows. Catalyzes the formation of 5-methyl-uridine at position 1939 (m5U1939) in 23S rRNA. The chain is 23S rRNA (uracil(1939)-C(5))-methyltransferase RlmD from Burkholderia lata (strain ATCC 17760 / DSM 23089 / LMG 22485 / NCIMB 9086 / R18194 / 383).